The chain runs to 305 residues: NAD kinase (305 aa).

Aspartate 88 (proton acceptor) is an active-site residue. NAD(+)-binding positions include 88-89 (DG), arginine 93, 162-163 (NE), lysine 173, asparagine 192, 203-208 (TAYSFS), and glutamine 262.

Belongs to the NAD kinase family. Requires a divalent metal cation as cofactor.

Its subcellular location is the cytoplasm. The enzyme catalyses NAD(+) + ATP = ADP + NADP(+) + H(+). In terms of biological role, involved in the regulation of the intracellular balance of NAD and NADP, and is a key enzyme in the biosynthesis of NADP. Catalyzes specifically the phosphorylation on 2'-hydroxyl of the adenosine moiety of NAD to yield NADP. The polypeptide is NAD kinase (Tropheryma whipplei (strain TW08/27) (Whipple's bacillus)).